The chain runs to 2507 residues: Putative neurobeachin homolog (2507 aa).

Disordered regions lie at residues 1 to 109 (MEIS…PPLP), 1307 to 1377 (PSSP…DGGR), and 1629 to 1649 (SRHEEANLPEGEKNEEPEISE). The segment covering 24–37 (PVEEGEEVNDEESN) has biased composition (acidic residues). Polar residues predominate over residues 1317-1340 (TTQKQENSENVNSETSPENGSNGK). The span at 1360–1372 (DGEEEENGEEGQG) shows a compositional bias: acidic residues. The BEACH-type PH domain maps to 1690-1798 (PSSQSACFST…AVKKVVYQLP (109 aa)). Positions 1817-2106 (MTPRQLFKHS…QLLTEAHPPR (290 aa)) constitute a BEACH domain. WD repeat units follow at residues 2265 to 2308 (GHGD…GFIA), 2326 to 2365 (GHEASISALCVSAEHGLVVSGCEDGVILIHTTSSDLLRRI), 2405 to 2444 (LVDDKIECVTVTRDGEFAVTGAVNGRINIWRMFPLTKLYT), and 2447 to 2486 (PLNSAVRSVAVVASHRFILGGLDSGAIVVFNADFNRWHYE).

The protein belongs to the WD repeat neurobeachin family. In terms of assembly, interacts with RII subunit of PKA. As to expression, expressed in vulval precursor cells and rectal epithelia in L2 and L3 larvae. In L4 larvae, expression is seen in intestinal epithelial cells.

The protein resides in the cytoplasm. It localises to the membrane. The protein localises to the nucleus. Its function is as follows. Binds to type II regulatory subunits of protein kinase A and anchors/targets them to the membrane. May anchor the kinase to cytoskeletal and/or organelle-associated proteins. Regulates endosomal traffic in polarized epithelial cells such as the vulval precursor cells and intestinal cells. Thought to act as a negative regulator of lin-12 activity in vulval precursor cells. May have a role in the internalization process from basolateral surface of polarized epithelial cells. This is Putative neurobeachin homolog (sel-2) from Caenorhabditis elegans.